Consider the following 1819-residue polypeptide: Non-reducing polyketide synthase 8 (1819 aa).

One can recognise a Starter acyltransferase (SAT) domain in the interval 38 to 265; the sequence is QLTLLSKQKQ…QKIINLPVYG (228 aa). The Ketosynthase family 3 (KS3) domain occupies 405–840; that stretch reads KSSIAIVGMS…GGNTMIAIEE (436 aa). Catalysis depends on for beta-ketoacyl synthase activity residues Cys578, His714, and His758. The 320-residue stretch at 943 to 1262 folds into the Malonyl-CoA:ACP transacylase (MAT) domain; it reads FAFTGQGASY…SLSTLHCAGA (320 aa). Positions 1336–1476 are N-terminal hotdog fold; the sequence is QRIIEESFDG…GDRSAWLSSW (141 aa). In terms of domain architecture, PKS/mFAS DH spans 1336 to 1646; that stretch reads QRIIEESFDG…FRQYPRILLN (311 aa). His1368 functions as the Proton acceptor; for dehydratase activity in the catalytic mechanism. The interval 1404-1642 is dehydratase (DH) domain; it reads AMNVADLEVV…GGIKFRQYPR (239 aa). Residues 1498-1646 are C-terminal hotdog fold; it reads IANRLSHNMA…FRQYPRILLN (149 aa). Asp1557 (proton donor; for dehydratase activity) is an active-site residue. The Carrier domain maps to 1741 to 1818; that stretch reads VDTNSVASKA…DLRSWLMEYY (78 aa). Ser1778 carries the post-translational modification O-(pantetheine 4'-phosphoryl)serine.

It depends on pantetheine 4'-phosphate as a cofactor.

The protein operates within secondary metabolite biosynthesis. Its function is as follows. Non-reducing polyketide synthase; part of the gene cluster that mediates the biosynthesis of dibenzodioxocinones such as pestalotiollide B, a novel class of inhibitors against cholesterol ester transfer protein (CEPT). The biosynthesis initiates from condensation of acetate and malonate units catalyzed by the non-reducing PKS pks8/GME11356. Pks8/GME11356 lacks a thioesterase (TE) domain, which is important to the cyclizing of the third ring of atrochrysone carboxylic acid, and the esterase GME11355 might play the role of TE and catalyzes the cyclization reaction of the C ring. The lactamase-like protein GME11357 (or other beta-lactamases in Pestalotiopsis microspora) probably hydrolyzes the thioester bond between the ACP of pks8/GME11356 and the intermediate to release atrochrysone carboxylic acid, which is spontaneously dehydrates to form endocrocin anthrone. Endocrocin anthrone is further converted to emodin via the endocrocin intermediate. Emodin is then oxidized by several enzymes such as the Baeyer-Villiger oxidase GME11358, the oxidoreductase GME11367, the short chain dehydrogenase/reductase GME11373, as well as by other oxidoreductases from the cluster, to modify the A and C rings and open the B ring, and finally yield monodictyphenone. The prenyltransferase GME11375 may catalyze the addition reaction between the C5 side chains and the carbon bone of dibenzodioxocinones. The remaining biochemical reactions to the final product dibenzodioxocinones should be methylation catalyzed by methyltransferase GME11366 and reduction and lactonization reaction catalyzed by a series of oxidordeuctases. This chain is Non-reducing polyketide synthase 8, found in Pestalotiopsis microspora.